Reading from the N-terminus, the 469-residue chain is ATP synthase subunit beta (469 aa).

155–162 (GGAGVGKT) lines the ATP pocket.

Belongs to the ATPase alpha/beta chains family. F-type ATPases have 2 components, CF(1) - the catalytic core - and CF(0) - the membrane proton channel. CF(1) has five subunits: alpha(3), beta(3), gamma(1), delta(1), epsilon(1). CF(0) has three main subunits: a(1), b(2) and c(9-12). The alpha and beta chains form an alternating ring which encloses part of the gamma chain. CF(1) is attached to CF(0) by a central stalk formed by the gamma and epsilon chains, while a peripheral stalk is formed by the delta and b chains.

The protein resides in the cell inner membrane. It catalyses the reaction ATP + H2O + 4 H(+)(in) = ADP + phosphate + 5 H(+)(out). In terms of biological role, produces ATP from ADP in the presence of a proton gradient across the membrane. The catalytic sites are hosted primarily by the beta subunits. This Thermosipho melanesiensis (strain DSM 12029 / CIP 104789 / BI429) protein is ATP synthase subunit beta.